We begin with the raw amino-acid sequence, 159 residues long: Ecotin (159 aa).

A signal peptide spans 1-22 (MRPTPLSTILALTMAATAPAMA). A disulfide bond links cysteine 68 and cysteine 105.

It belongs to the protease inhibitor I11 (ecotin) family. As to quaternary structure, homodimer.

The protein resides in the periplasm. Functionally, general inhibitor of family S1 serine proteases. The chain is Ecotin from Pseudomonas putida (strain W619).